Reading from the N-terminus, the 236-residue chain is Small ribosomal subunit protein eS6 (236 aa).

Residues serine 232 and serine 233 each carry the phosphoserine modification.

The protein belongs to the eukaryotic ribosomal protein eS6 family. In terms of processing, phosphorylated.

This chain is Small ribosomal subunit protein eS6 (RPS6), found in Eremothecium gossypii (strain ATCC 10895 / CBS 109.51 / FGSC 9923 / NRRL Y-1056) (Yeast).